The chain runs to 445 residues: Ribosomal protein uS12 methylthiotransferase RimO (445 aa).

The MTTase N-terminal domain occupies 4–119; sequence YKVGMVSLGC…INEAIMNFIN (116 aa). [4Fe-4S] cluster contacts are provided by Cys13, Cys48, Cys82, Cys157, Cys161, and Cys164. Residues 143-373 enclose the Radical SAM core domain; sequence TTDKATAYLR…MLLQKELSEE (231 aa). The TRAM domain occupies 376–441; it reads KNKLGREYDV…EYDLVGVVCN (66 aa).

It belongs to the methylthiotransferase family. RimO subfamily. [4Fe-4S] cluster serves as cofactor.

It is found in the cytoplasm. The catalysed reaction is L-aspartate(89)-[ribosomal protein uS12]-hydrogen + (sulfur carrier)-SH + AH2 + 2 S-adenosyl-L-methionine = 3-methylsulfanyl-L-aspartate(89)-[ribosomal protein uS12]-hydrogen + (sulfur carrier)-H + 5'-deoxyadenosine + L-methionine + A + S-adenosyl-L-homocysteine + 2 H(+). Catalyzes the methylthiolation of an aspartic acid residue of ribosomal protein uS12. The protein is Ribosomal protein uS12 methylthiotransferase RimO of Clostridium perfringens (strain SM101 / Type A).